Consider the following 587-residue polypeptide: L-ornithine N(5)-monooxygenase (587 aa).

FAD contacts are provided by residues 53–61 and Gln72; that span reads EKHTSFQWH. Lys77 serves as a coordination point for substrate. Position 235 to 238 (235 to 238) interacts with NADP(+); sequence GGQS. Substrate is bound by residues 282–285 and Asn312; that span reads NEVF. NADP(+) is bound at residue 312 to 314; that stretch reads NYS. The interval 488–511 is disordered; that stretch reads DNSAASGVSGASTPLTSPSEEEGK. The segment covering 491 to 505 has biased composition (polar residues); that stretch reads AASGVSGASTPLTSP. Residue 567-569 coordinates FAD; the sequence is TLL. A substrate-binding site is contributed by Ser570.

This sequence belongs to the lysine N(6)-hydroxylase/L-ornithine N(5)-oxygenase family. Homotetramer. Requires FAD as cofactor.

It carries out the reaction L-ornithine + NADPH + O2 = N(5)-hydroxy-L-ornithine + NADP(+) + H2O. The catalysed reaction is L-ornithine + NADH + O2 = N(5)-hydroxy-L-ornithine + NAD(+) + H2O. It functions in the pathway siderophore biosynthesis; ferrichrome biosynthesis. In terms of biological role, L-ornithine N(5)-monooxygenase; part of the siderophore biosynthetic pathway. Omphalotus olearius produces ferrichrome A, but no other siderophore has been detected. Ferrichrome A consists of a hexapeptide ring made up of one glycine, two serine, and three N(5)-hydroxyornithine amino acid residues, the latter acylated by trans-(alpha-methyl)-glutaconic acid residues. The biosynthesis of ferrichrome A depends on the hydroxylation of ornithine to N(5)-hydroxyornithine, catalyzed by the monooxygenase omo1. The second step, the acylation of N(5)-hydroxy-L-ornithine is probably catalyzed by the N-acyltransferase ato1. Finally, assembly of ferrichrome A is catalyzed by the nonribosomal peptide synthase (NRPS) fso1. The sequence is that of L-ornithine N(5)-monooxygenase from Omphalotus olearius (Jack o'lantern).